The primary structure comprises 167 residues: Ribosome maturation factor RimM (167 aa).

A PRC barrel domain is found at 94 to 165; sequence ENEFYYSDII…KIIITPMEGL (72 aa).

It belongs to the RimM family. Binds ribosomal protein uS19.

The protein resides in the cytoplasm. An accessory protein needed during the final step in the assembly of 30S ribosomal subunit, possibly for assembly of the head region. Essential for efficient processing of 16S rRNA. May be needed both before and after RbfA during the maturation of 16S rRNA. It has affinity for free ribosomal 30S subunits but not for 70S ribosomes. In Staphylococcus aureus (strain NCTC 8325 / PS 47), this protein is Ribosome maturation factor RimM.